The sequence spans 340 residues: tRNA N6-adenosine threonylcarbamoyltransferase (340 aa).

His115 and His119 together coordinate Fe cation. Substrate-binding positions include 138–142 (VVSGG), Asp171, Gly184, Asp188, and Asn278. Asp306 is a Fe cation binding site.

This sequence belongs to the KAE1 / TsaD family. Fe(2+) is required as a cofactor.

Its subcellular location is the cytoplasm. The enzyme catalyses L-threonylcarbamoyladenylate + adenosine(37) in tRNA = N(6)-L-threonylcarbamoyladenosine(37) in tRNA + AMP + H(+). Its function is as follows. Required for the formation of a threonylcarbamoyl group on adenosine at position 37 (t(6)A37) in tRNAs that read codons beginning with adenine. Is involved in the transfer of the threonylcarbamoyl moiety of threonylcarbamoyl-AMP (TC-AMP) to the N6 group of A37, together with TsaE and TsaB. TsaD likely plays a direct catalytic role in this reaction. This Clostridium botulinum (strain Hall / ATCC 3502 / NCTC 13319 / Type A) protein is tRNA N6-adenosine threonylcarbamoyltransferase.